The sequence spans 473 residues: UDP-N-acetylmuramate--L-alanine ligase (473 aa).

Residue Gly-115–Thr-121 coordinates ATP.

Belongs to the MurCDEF family.

The protein localises to the cytoplasm. It catalyses the reaction UDP-N-acetyl-alpha-D-muramate + L-alanine + ATP = UDP-N-acetyl-alpha-D-muramoyl-L-alanine + ADP + phosphate + H(+). The protein operates within cell wall biogenesis; peptidoglycan biosynthesis. Its function is as follows. Cell wall formation. This chain is UDP-N-acetylmuramate--L-alanine ligase, found in Rhizorhabdus wittichii (strain DSM 6014 / CCUG 31198 / JCM 15750 / NBRC 105917 / EY 4224 / RW1) (Sphingomonas wittichii).